We begin with the raw amino-acid sequence, 320 residues long: ATP-dependent 6-phosphofructokinase (320 aa).

Position 12 (Gly12) interacts with ATP. Residue Arg22 to Arg26 participates in ADP binding. ATP-binding positions include Arg73 to Phe74 and Gly103 to Ser106. A Mg(2+)-binding site is contributed by Asp104. Thr126–Asp128 provides a ligand contact to substrate. The active-site Proton acceptor is Asp128. Arg155 is an ADP binding site. Residues Arg163 and Met170–Arg172 contribute to the substrate site. Residues Gly186–Glu188, Lys212, and Lys214–His216 each bind ADP. Residues Glu223, Arg244, and His250–Arg253 contribute to the substrate site.

Belongs to the phosphofructokinase type A (PFKA) family. ATP-dependent PFK group I subfamily. Prokaryotic clade 'B1' sub-subfamily. Homotetramer. Mg(2+) is required as a cofactor.

It localises to the cytoplasm. The enzyme catalyses beta-D-fructose 6-phosphate + ATP = beta-D-fructose 1,6-bisphosphate + ADP + H(+). It participates in carbohydrate degradation; glycolysis; D-glyceraldehyde 3-phosphate and glycerone phosphate from D-glucose: step 3/4. Allosterically activated by ADP and other diphosphonucleosides, and allosterically inhibited by phosphoenolpyruvate. Catalyzes the phosphorylation of D-fructose 6-phosphate to fructose 1,6-bisphosphate by ATP, the first committing step of glycolysis. The sequence is that of ATP-dependent 6-phosphofructokinase from Blochmanniella floridana.